A 429-amino-acid polypeptide reads, in one-letter code: Malate dehydrogenase [NADP] 1, chloroplastic (429 aa).

Residues 1 to 40 constitute a chloroplast transit peptide; sequence MGLSTAYSPVGSHLAPAPLGHRRSAQLHRPRRALLATVRC. Cysteines 64 and 69 form a disulfide. 93–99 is a binding site for NADP(+); the sequence is GAAGMIS. Residues R174 and R180 each coordinate substrate. Residues N187, Q194, and 211 to 213 each bind NADP(+); that span reads VGN. Substrate is bound by residues N213 and R244. Catalysis depends on H269, which acts as the Proton acceptor. A disulfide bond links C405 and C417.

This sequence belongs to the LDH/MDH superfamily. MDH type 2 family. As to quaternary structure, homodimer.

Its subcellular location is the plastid. The protein localises to the chloroplast. The enzyme catalyses (S)-malate + NADP(+) = oxaloacetate + NADPH + H(+). Chloroplast NADP-MDH is activated upon illumination. In order to be enzymatically active, disulfide bridges on the protein must be reduced by thioredoxin which receives electrons from ferredoxin and the electron transport system of photosynthesis. Its function is as follows. The chloroplastic, NADP-dependent form is essential for the photosynthesis C4 cycle, which allows plants to circumvent the problem of photorespiration. In C4 plants, NADP-MDH activity acts to convert oxaloacetate to malate in chloroplasts of mesophyll cells for transport to the bundle sheath cells. This chain is Malate dehydrogenase [NADP] 1, chloroplastic, found in Sorghum bicolor (Sorghum).